Consider the following 365-residue polypeptide: Glutamate 5-kinase 1 (365 aa).

Lys9 serves as a coordination point for ATP. Residues Ser49, Asp136, and Asn148 each contribute to the substrate site. Residues 168-169 (TD) and 210-216 (TGGMKSK) each bind ATP. The PUA domain occupies 276-353 (SGEIIIDAGA…DELDFEKTFE (78 aa)).

This sequence belongs to the glutamate 5-kinase family.

Its subcellular location is the cytoplasm. It carries out the reaction L-glutamate + ATP = L-glutamyl 5-phosphate + ADP. It participates in amino-acid biosynthesis; L-proline biosynthesis; L-glutamate 5-semialdehyde from L-glutamate: step 1/2. Its function is as follows. Catalyzes the transfer of a phosphate group to glutamate to form L-glutamate 5-phosphate. The sequence is that of Glutamate 5-kinase 1 from Bacillus subtilis (strain 168).